A 210-amino-acid polypeptide reads, in one-letter code: MRLRKVKDALVRVQDSPYFSNPEQLSTIESESLFVEIGCGKSWFLSQQAQQNPKCFFVGIEREPTIVLKAINKVNRLEVKPRNLLITCLDANQLTEYLKPQSISKIFINFPDPWPKKRHTLRRLTAPHFLKQFHQLLKKQGLIEFKTDNDQLFEFTLEVLQKTVAHFKIIEQTTDLHNSPLTSTNIMTEYEQRFVSLGVKIKKLTLEKLN.

Positions 36, 61, 90, and 112 each coordinate S-adenosyl-L-methionine. Residue D112 is part of the active site. Residues K116, D148, and 188 to 191 (TEYE) each bind substrate.

Belongs to the class I-like SAM-binding methyltransferase superfamily. TrmB family.

The catalysed reaction is guanosine(46) in tRNA + S-adenosyl-L-methionine = N(7)-methylguanosine(46) in tRNA + S-adenosyl-L-homocysteine. It participates in tRNA modification; N(7)-methylguanine-tRNA biosynthesis. Catalyzes the formation of N(7)-methylguanine at position 46 (m7G46) in tRNA. The polypeptide is tRNA (guanine-N(7)-)-methyltransferase (Mycoplasma pneumoniae (strain ATCC 29342 / M129 / Subtype 1) (Mycoplasmoides pneumoniae)).